A 334-amino-acid chain; its full sequence is Putative binding protein YtlA (334 aa).

A signal peptide spans 1-23 (MNRWLRLGFACVGSIFLMFALAA). Residue Cys24 is the site of N-palmitoyl cysteine attachment. A lipid anchor (S-diacylglycerol cysteine) is attached at Cys24.

This sequence belongs to the bacterial solute-binding protein SsuA/TauA family.

The protein resides in the cell membrane. In Bacillus subtilis (strain 168), this protein is Putative binding protein YtlA (ytlA).